We begin with the raw amino-acid sequence, 536 residues long: Methyl-accepting chemotaxis aspartate transducer (536 aa).

Residues 1–10 (MFNRIRISTS) lie on the Cytoplasmic side of the membrane. The helical transmembrane segment at 11-31 (LFLLLISFCIMQLISTGLSYV) threads the bilayer. Topologically, residues 32 to 188 (ALRADNHNLE…ASSQQAYGWS (157 aa)) are periplasmic. Residues 64 to 73 (RNTLNRAGTR) are the 3 Arg may form a positively charged pocket, which binds the alpha-carboxyl group of the attractant AA. Residues 189–209 (IWLVAGAVLMLLVVTLSAMWW) traverse the membrane as a helical segment. Residues 210–536 (LRTMLVQPLN…VKETLDCQTA (327 aa)) are Cytoplasmic-facing. The HAMP domain occupies 212–264 (TMLVQPLNIIRGHFERIASGDLSAPIEVYGRNEISQLFASLQRMQQSLIGTVG). One can recognise a Methyl-accepting transducer domain in the interval 269–498 (GAESILIGLQ…ESASAAAALE (230 aa)). A Glutamate methyl ester (Gln) modification is found at Gln-293. Position 300 is a glutamate methyl ester (Glu) (Glu-300). Gln-307 carries the post-translational modification Glutamate methyl ester (Gln). Glutamate methyl ester (Glu) is present on residues Glu-489 and Glu-498.

The protein belongs to the methyl-accepting chemotaxis (MCP) protein family.

The protein resides in the cell inner membrane. Its function is as follows. This protein responds to changes in Asp concentration in the environment, transduces a signal from the outside to the inside of the cell, and facilitates sensory adaptation through various levels of methylation. Chemotactic-signal transducers respond to changes in the concentration of attractants and repellents in the environment, transduce a signal from the outside to the inside of the cell, and facilitate sensory adaptation through the variation of the level of methylation. Attractants increase the level of methylation while repellents decrease the level of methylation, the methyl groups are added by the methyltransferase CheR and removed by the methylesterase CheB. The chain is Methyl-accepting chemotaxis aspartate transducer (tas) from Klebsiella aerogenes (strain ATCC 13048 / DSM 30053 / CCUG 1429 / JCM 1235 / KCTC 2190 / NBRC 13534 / NCIMB 10102 / NCTC 10006 / CDC 819-56) (Enterobacter aerogenes).